A 245-amino-acid chain; its full sequence is Ribonuclease 3 (245 aa).

Residues 19-148 (FKVFQEKIGI…FIGALYLDQG (130 aa)) enclose the RNase III domain. A Mg(2+)-binding site is contributed by E61. The active site involves D65. Mg(2+) contacts are provided by D134 and E137. E137 is a catalytic residue. In terms of domain architecture, DRBM spans 174–243 (DYKSQLQELI…AAEALKKLKE (70 aa)).

This sequence belongs to the ribonuclease III family. Homodimer. It depends on Mg(2+) as a cofactor.

The protein resides in the cytoplasm. It catalyses the reaction Endonucleolytic cleavage to 5'-phosphomonoester.. In terms of biological role, digests double-stranded RNA. Involved in the processing of primary rRNA transcript to yield the immediate precursors to the large and small rRNAs (23S and 16S). Processes some mRNAs, and tRNAs when they are encoded in the rRNA operon. Processes pre-crRNA and tracrRNA of type II CRISPR loci if present in the organism. The polypeptide is Ribonuclease 3 (Bacillus cereus (strain ATCC 14579 / DSM 31 / CCUG 7414 / JCM 2152 / NBRC 15305 / NCIMB 9373 / NCTC 2599 / NRRL B-3711)).